The sequence spans 431 residues: Acrosin (431 aa).

A signal peptide spans 1–16 (MLPTAVLLVLVVSVVA). The N-linked (GlcNAc...) asparagine glycan is linked to Asn-19. 6 disulfides stabilise this stretch: Cys-22–Cys-152, Cys-26–Cys-160, Cys-71–Cys-87, Cys-175–Cys-244, Cys-207–Cys-223, and Cys-234–Cys-264. Residues 40-288 (VVGGQAAQQG…FLDWIASRIG (249 aa)) form the Peptidase S1 domain. Catalysis depends on charge relay system residues His-86 and Asp-140. An N-linked (GlcNAc...) asparagine glycan is attached at Asn-208. The active-site Charge relay system is Ser-238. The interval 295–385 (IQPATPTPPT…PPPASTKPPQ (91 aa)) is disordered. Positions 331 to 341 (PHPHPHPHPHP) are enriched in basic residues. The span at 342–381 (RPPQPPAAQAPPPPPPPPPPPPPPPPPPPPPPPPPPPAST) shows a compositional bias: pro residues. The propeptide at 351-431 (APPPPPPPPP…TEIPEVTLAS (81 aa)) is pro-rich.

The protein belongs to the peptidase S1 family. In terms of assembly, heavy chain (catalytic) and a light chain linked by two disulfide bonds. Forms a heterodimer with SERPINA5.

The catalysed reaction is Preferential cleavage: Arg-|-Xaa, Lys-|-Xaa.. Its activity is regulated as follows. Inhibited by SERPINA5. In terms of biological role, acrosin is the major protease of mammalian spermatozoa. It is a serine protease of trypsin-like cleavage specificity, it is synthesized in a zymogen form, proacrosin and stored in the acrosome. The polypeptide is Acrosin (ACR) (Oryctolagus cuniculus (Rabbit)).